The sequence spans 260 residues: Putative ABC transporter ATP-binding protein (260 aa).

The 240-residue stretch at 4-243 folds into the ABC transporter domain; it reads ISMKNVTLKK…QVLENFYESP (240 aa). An ATP-binding site is contributed by 36–43; sequence GLNGSGKT.

It belongs to the ABC transporter superfamily.

The sequence is that of Putative ABC transporter ATP-binding protein (abcX) from Streptococcus mutans serotype c (strain ATCC 700610 / UA159).